Consider the following 527-residue polypeptide: uncharacterized protein (527 aa).

Residues 1–93 (MSYMIAVPDM…AGAYASAEAT (93 aa)) enclose the PE domain. Composition is skewed to gly residues over residues 264-286 (IHGH…GVQG), 292-384 (GAAG…AGNG), and 472-515 (NGGD…GGSR). Disordered stretches follow at residues 264–384 (IHGH…AGNG) and 472–527 (NGGD…TPGQ).

This sequence belongs to the mycobacterial PE family. PGRS subfamily.

This is an uncharacterized protein from Mycobacterium tuberculosis (strain CDC 1551 / Oshkosh).